The primary structure comprises 305 residues: Deoxyribonuclease gamma (305 aa).

The first 20 residues, 1 to 20, serve as a signal peptide directing secretion; that stretch reads MSRELAPLLLLLLSIHSALA. Residues 35-51 carry the Bipartite nuclear localization signal motif; that stretch reads KQEDKNAMDVIVKVIKR. Catalysis depends on residues Glu100 and His155. Cysteines 194 and 231 form a disulfide. A not required for free DNA-nuclease activity but required for activity towards liposome-coated DNA region spans residues 284-305; the sequence is SRAFTNSKKSVTLRKKTKSKRS. Residues 296-304 carry the Nuclear localization signal motif; that stretch reads LRKKTKSKR.

It belongs to the DNase I family. Ca(2+) serves as cofactor. Requires Mg(2+) as cofactor. Poly-ADP-ribosylated by PARP1. ADP-ribosylation negatively regulates enzymatic activity during apoptosis. Liver and spleen.

It localises to the nucleus. It is found in the endoplasmic reticulum. The protein localises to the secreted. With respect to regulation, inhibited by zinc. Functionally, has DNA hydrolytic activity. Is capable of both single- and double-stranded DNA cleavage, producing DNA fragments with 3'-OH ends. Can cleave chromatin to nucleosomal units and cleaves nucleosomal and liposome-coated DNA. Acts in internucleosomal DNA fragmentation (INDF) during apoptosis and necrosis. The role in apoptosis includes myogenic and neuronal differentiation, and BCR-mediated clonal deletion of self-reactive B cells. Is active on chromatin in apoptotic cell-derived membrane-coated microparticles and thus suppresses anti-DNA autoimmunity. Together with DNASE1, plays a key role in degrading neutrophil extracellular traps (NETs). NETs are mainly composed of DNA fibers and are released by neutrophils to bind pathogens during inflammation. Degradation of intravascular NETs by DNASE1 and DNASE1L3 is required to prevent formation of clots that obstruct blood vessels and cause organ damage following inflammation. The sequence is that of Deoxyribonuclease gamma from Homo sapiens (Human).